The following is a 108-amino-acid chain: Putative DNA-directed RNA polymerase subunit 1 inactive homolog (108 aa).

The chain is Putative DNA-directed RNA polymerase subunit 1 inactive homolog from Acanthamoeba polyphaga (Amoeba).